A 926-amino-acid polypeptide reads, in one-letter code: Isoleucine--tRNA ligase (926 aa).

Positions 57 to 67 (PYANGNIHMGH) match the 'HIGH' region motif. Glu-555 contributes to the L-isoleucyl-5'-AMP binding site. Residues 596 to 600 (KMSKS) carry the 'KMSKS' region motif. Lys-599 contributes to the ATP binding site. Residues Cys-897, Cys-900, Cys-914, and Cys-917 each coordinate Zn(2+).

This sequence belongs to the class-I aminoacyl-tRNA synthetase family. IleS type 1 subfamily. As to quaternary structure, monomer. The cofactor is Zn(2+).

The protein resides in the cytoplasm. It carries out the reaction tRNA(Ile) + L-isoleucine + ATP = L-isoleucyl-tRNA(Ile) + AMP + diphosphate. Functionally, catalyzes the attachment of isoleucine to tRNA(Ile). As IleRS can inadvertently accommodate and process structurally similar amino acids such as valine, to avoid such errors it has two additional distinct tRNA(Ile)-dependent editing activities. One activity is designated as 'pretransfer' editing and involves the hydrolysis of activated Val-AMP. The other activity is designated 'posttransfer' editing and involves deacylation of mischarged Val-tRNA(Ile). This chain is Isoleucine--tRNA ligase, found in Natranaerobius thermophilus (strain ATCC BAA-1301 / DSM 18059 / JW/NM-WN-LF).